A 492-amino-acid polypeptide reads, in one-letter code: MKKVILSVSDKSGIVDFAKSLVGLDYELYSTGGTKRALDEAGVPVKSVSDLTQFDEIMDGRVKTLHPAVHGGILADRDKPEHLQQLKDKGIDLIDIVVVNLYPFKETVANPDVTEMDAIENIDIGGPTMLRAAAKNFKHVTTIVDPSDYDEVIEHIKNDSLDETFRKSLMIKVFEHTNDYDNAIVNFFKENKEPLRYGENPQQDAYFVRTSDAPNTIAGAKQLHGKQLSFNNIKDADATLALAKKFEEPAAVAVKHMNPCGVGVGSSIEEAFQNAYDADSQSIFGGIVAVNRPVTKELAEKLHSIFLEVVIAPSFTEEALEVLTKKKNIRLLEVEMTVDHDEKEYVSVSGGYLVQDKDTKTISRDDMKVVTKAEPTEEQWKAMELGWKVVPSVKSNAIILSNDHQTVGIGAGQMNRVGSAEIAIERAIEINDNVALVSDGFFPMDDTVELAAKAGIKAIIQPGGSIKDQDSIDMADKHGIAMVMTGVRHFKH.

Residues Met1 to Val144 form the MGS-like domain.

It belongs to the PurH family.

The catalysed reaction is (6R)-10-formyltetrahydrofolate + 5-amino-1-(5-phospho-beta-D-ribosyl)imidazole-4-carboxamide = 5-formamido-1-(5-phospho-D-ribosyl)imidazole-4-carboxamide + (6S)-5,6,7,8-tetrahydrofolate. It carries out the reaction IMP + H2O = 5-formamido-1-(5-phospho-D-ribosyl)imidazole-4-carboxamide. It functions in the pathway purine metabolism; IMP biosynthesis via de novo pathway; 5-formamido-1-(5-phospho-D-ribosyl)imidazole-4-carboxamide from 5-amino-1-(5-phospho-D-ribosyl)imidazole-4-carboxamide (10-formyl THF route): step 1/1. Its pathway is purine metabolism; IMP biosynthesis via de novo pathway; IMP from 5-formamido-1-(5-phospho-D-ribosyl)imidazole-4-carboxamide: step 1/1. The protein is Bifunctional purine biosynthesis protein PurH of Staphylococcus carnosus (strain TM300).